The sequence spans 89 residues: Cell division protein FtsB (89 aa).

Over methionine 1–proline 3 the chain is Cytoplasmic. A helical membrane pass occupies residues isoleucine 4–phenylalanine 21. The Periplasmic portion of the chain corresponds to alanine 22 to lysine 89. A coiled-coil region spans residues valine 29 to histidine 62.

It belongs to the FtsB family. Part of a complex composed of FtsB, FtsL and FtsQ.

Its subcellular location is the cell inner membrane. Functionally, essential cell division protein. May link together the upstream cell division proteins, which are predominantly cytoplasmic, with the downstream cell division proteins, which are predominantly periplasmic. In Coxiella burnetii (strain RSA 493 / Nine Mile phase I), this protein is Cell division protein FtsB.